Consider the following 305-residue polypeptide: UDP-3-O-acyl-N-acetylglucosamine deacetylase (305 aa).

Positions 78, 237, and 241 each coordinate Zn(2+). The Proton donor role is filled by His-264.

This sequence belongs to the LpxC family. It depends on Zn(2+) as a cofactor.

The catalysed reaction is a UDP-3-O-[(3R)-3-hydroxyacyl]-N-acetyl-alpha-D-glucosamine + H2O = a UDP-3-O-[(3R)-3-hydroxyacyl]-alpha-D-glucosamine + acetate. It functions in the pathway glycolipid biosynthesis; lipid IV(A) biosynthesis; lipid IV(A) from (3R)-3-hydroxytetradecanoyl-[acyl-carrier-protein] and UDP-N-acetyl-alpha-D-glucosamine: step 2/6. Functionally, catalyzes the hydrolysis of UDP-3-O-myristoyl-N-acetylglucosamine to form UDP-3-O-myristoylglucosamine and acetate, the committed step in lipid A biosynthesis. In Cupriavidus taiwanensis (strain DSM 17343 / BCRC 17206 / CCUG 44338 / CIP 107171 / LMG 19424 / R1) (Ralstonia taiwanensis (strain LMG 19424)), this protein is UDP-3-O-acyl-N-acetylglucosamine deacetylase.